The chain runs to 96 residues: Large ribosomal subunit protein bL28 (96 aa).

The protein belongs to the bacterial ribosomal protein bL28 family.

The sequence is that of Large ribosomal subunit protein bL28 from Methylobacterium nodulans (strain LMG 21967 / CNCM I-2342 / ORS 2060).